A 226-amino-acid polypeptide reads, in one-letter code: NADH-ubiquinone oxidoreductase chain 6 (226 aa).

The next 5 membrane-spanning stretches (helical) occupy residues 2-22 (STLGLLIMLLGIIIMCTLVIL), 28-48 (IYSILNLIVIYGCYASILLTV), 56-76 (IYILVNVGAIAVLFLFIVMMI), 90-110 (YNIYMIVGIIGVVGLLGILIT), and 169-189 (IWFIMACIILLIGMVGVIYIT).

The protein belongs to the complex I subunit 6 family.

The protein resides in the mitochondrion membrane. It catalyses the reaction a ubiquinone + NADH + 5 H(+)(in) = a ubiquinol + NAD(+) + 4 H(+)(out). Its function is as follows. Core subunit of the mitochondrial membrane respiratory chain NADH dehydrogenase (Complex I) that is believed to belong to the minimal assembly required for catalysis. Complex I functions in the transfer of electrons from NADH to the respiratory chain. The immediate electron acceptor for the enzyme is believed to be ubiquinone. The sequence is that of NADH-ubiquinone oxidoreductase chain 6 (nad6) from Dictyostelium discoideum (Social amoeba).